We begin with the raw amino-acid sequence, 67 residues long: ACQASQLAVCASAILSGAKPSGECCGNLRAQQPCFCQYAKDPTYGQYIRSPHARDTLQSCGLAVPHC.

4 cysteine pairs are disulfide-bonded: Cys2–Cys34, Cys10–Cys24, Cys25–Cys60, and Cys36–Cys67.

Its function is as follows. Transfer lipids across membranes. May play a role in plant defense or in the biosynthesis of cuticle layers. This Triticum aestivum (Wheat) protein is Non-specific lipid-transfer protein 2P.